The primary structure comprises 219 residues: Germin-like protein subfamily 2 member 3 (219 aa).

The first 22 residues, 1 to 22 (MATSMIPIFVTFMLVAAHMALA), serve as a signal peptide directing secretion. Cys-31 and Cys-46 are oxidised to a cystine. In terms of domain architecture, Cupin type-1 spans 60 to 209 (IGLATAAATA…AFGAAAPEIQ (150 aa)). The N-linked (GlcNAc...) asparagine glycan is linked to Asn-70. 4 residues coordinate Mn(2+): His-109, His-111, Glu-116, and His-155.

It belongs to the germin family. As to quaternary structure, oligomer (believed to be a pentamer but probably hexamer).

It localises to the secreted. The protein localises to the extracellular space. The protein resides in the apoplast. In terms of biological role, may play a role in plant defense. Probably has no oxalate oxidase activity even if the active site is conserved. The chain is Germin-like protein subfamily 2 member 3 (GLP8) from Arabidopsis thaliana (Mouse-ear cress).